The following is a 180-amino-acid chain: Large ribosomal subunit protein uL5 (180 aa).

Belongs to the universal ribosomal protein uL5 family. Part of the 50S ribosomal subunit; part of the 5S rRNA/L5/L18/L25 subcomplex. Contacts the 5S rRNA and the P site tRNA. Forms a bridge to the 30S subunit in the 70S ribosome.

Functionally, this is one of the proteins that bind and probably mediate the attachment of the 5S RNA into the large ribosomal subunit, where it forms part of the central protuberance. In the 70S ribosome it contacts protein S13 of the 30S subunit (bridge B1b), connecting the 2 subunits; this bridge is implicated in subunit movement. Contacts the P site tRNA; the 5S rRNA and some of its associated proteins might help stabilize positioning of ribosome-bound tRNAs. The protein is Large ribosomal subunit protein uL5 of Mycoplasma capricolum subsp. capricolum (strain California kid / ATCC 27343 / NCTC 10154).